Consider the following 475-residue polypeptide: FAD-dependent monooxygenase sdgC (475 aa).

The N-terminal stretch at 1 to 23 (MDKRSFKVIVVGGSIAGLTLAHS) is a signal peptide. E35, G49, and R126 together coordinate FAD. N236 is a glycosylation site (N-linked (GlcNAc...) asparagine). FAD is bound at residue A330. The chain crosses the membrane as a helical span at residues 446 to 466 (ISGVLLLVIPIIALVYGYSVI).

It belongs to the paxM FAD-dependent monooxygenase family. It depends on FAD as a cofactor.

The protein localises to the membrane. The protein operates within secondary metabolite biosynthesis. FAD-dependent monooxygenase; part of the gene cluster that mediates the biosynthesis of the polyenes aspernidgulenes. The carbon backbone of aspernidgulenes is synthesized by the HR-PKS sdgA, which accepts acetyl-CoA as the starter unit and performs malonyl-CoA extensions as well as regioselective methylation and reduction. The resulting nonaketide offloads the HR-PKS by intramolecular lactonization to yield the 5,6-dihydro-alpha-pyrone-containing hexaenoic acids preaspernidgulene A1 and A2. The FAD-dependent monooxygenase sdgC then installs the first epoxide on the penultimate double bond. Subsequently, the FAD-dependent monooxygenase sdgF presumably generates a ketone intermediate through Meinwald rearrangement involving a hydride shift. Next, sdgC introduces another epoxide on the last olefin of the ketone intermediate after E/Z isomerization. The epoxide hydrolase sdgD then catalyzes stereospecific cyclization of the 5,6-dihydro-alpha-pyrone and opening of the epoxide ring to form an oxygenated trimethylcyclopentanone and an oxabicyclo[2.2.1]heptane unit. Finally, the bicyclic unit undergoes hydrolytic cleavage, either spontaneously or catalyzed by sdgD, to assemble the dimethyl-gamma-lactone moiety in aspernidgulene A1. This chain is FAD-dependent monooxygenase sdgC, found in Emericella nidulans (strain FGSC A4 / ATCC 38163 / CBS 112.46 / NRRL 194 / M139) (Aspergillus nidulans).